The primary structure comprises 494 residues: MFQVQKELASHEAVIVALFEEEETSSFVQELDKAFEGQLQVLLEEKELSTKKKAISKVHSLGKTEVKRYYFVGLGKKESYTTETLRSALGKTFKTLQAAKVQDAAILLDSFVTEKLDAIDVAHIAAEVQGLGTYELQTYKSDKKDRVELEKFTAITAEDAQEIEAALTVGYVHGRATNSARTLVNMPPNVLTATKLAEYAVELAEKYDMDYKVLEKEEMEELGMGALLAVNQGSVEPPKMIALIYKGKEEWTDVIGFVGKGITYDTGGYSLKPREGMVGMKGDMGGAAAVLGAMEIIGELRPEQNVIAVIPSTDNVVSGTAFKPDDVITSMSGKTIEVLNTDAEGRLALADGITYAKKLGANYLIDVATLTGGVIVALGNHTTGAMTNNEELFEQVLEASMETDESIWQLPIFDRDKERVRNSKFADLNNSPGREGHAVMAGTFLGEFAEDTPWVHLDIAGTSESSGAHDLGPAGATGAMVRTLATLVERFGEE.

Residues Lys260 and Asp265 each contribute to the Mn(2+) site. Residue Lys272 is part of the active site. 3 residues coordinate Mn(2+): Asp283, Asp342, and Glu344. Residue Arg346 is part of the active site.

The protein belongs to the peptidase M17 family. Mn(2+) serves as cofactor.

The protein resides in the cytoplasm. It carries out the reaction Release of an N-terminal amino acid, Xaa-|-Yaa-, in which Xaa is preferably Leu, but may be other amino acids including Pro although not Arg or Lys, and Yaa may be Pro. Amino acid amides and methyl esters are also readily hydrolyzed, but rates on arylamides are exceedingly low.. The catalysed reaction is Release of an N-terminal amino acid, preferentially leucine, but not glutamic or aspartic acids.. Its function is as follows. Presumably involved in the processing and regular turnover of intracellular proteins. Catalyzes the removal of unsubstituted N-terminal amino acids from various peptides. This is Probable cytosol aminopeptidase from Bacillus cereus (strain Q1).